A 149-amino-acid polypeptide reads, in one-letter code: Ribonuclease H (149 aa).

Residues Met-1–Asp-145 form the RNase H type-1 domain. Residues Asp-9, Glu-50, Asp-72, and Asp-137 each contribute to the Mg(2+) site.

Belongs to the RNase H family. In terms of assembly, monomer. Mg(2+) serves as cofactor.

The protein resides in the cytoplasm. It catalyses the reaction Endonucleolytic cleavage to 5'-phosphomonoester.. In terms of biological role, endonuclease that specifically degrades the RNA of RNA-DNA hybrids. The protein is Ribonuclease H of Clostridium botulinum (strain ATCC 19397 / Type A).